The chain runs to 254 residues: 5'-nucleotidase SurE (254 aa).

A divalent metal cation-binding residues include Asp8, Asp9, Ser40, and Asn93.

The protein belongs to the SurE nucleotidase family. Requires a divalent metal cation as cofactor.

It is found in the cytoplasm. The enzyme catalyses a ribonucleoside 5'-phosphate + H2O = a ribonucleoside + phosphate. In terms of biological role, nucleotidase that shows phosphatase activity on nucleoside 5'-monophosphates. The polypeptide is 5'-nucleotidase SurE (Methylorubrum extorquens (strain CM4 / NCIMB 13688) (Methylobacterium extorquens)).